Consider the following 3010-residue polypeptide: Genome polyprotein (3010 aa).

Ser2 carries the post-translational modification N-acetylserine; by host. The interaction with STAT1 stretch occupies residues Ser2 to Lys23. The interval Ser2–Pro58 is interaction with EIF2AK2/PKR. The interval Ser2–Arg59 is interaction with DDX3X. A disordered region spans residues Ser2–Ala75. The Cytoplasmic portion of the chain corresponds to Ser2–Asn168. 2 consecutive short sequence motifs (nuclear localization signal) follow at residues Pro5–Arg13 and Pro38–Thr43. Residues Pro7–Tyr16 are compositionally biased toward basic residues. Residue Ser53 is modified to Phosphoserine; by host. 2 short sequence motifs (nuclear localization signal) span residues Pro58–Pro64 and Pro66–Pro71. The span at Pro58–Ala68 shows a compositional bias: basic residues. Residue Ser99 is modified to Phosphoserine; by host. The tract at residues Pro112–Ala152 is important for endoplasmic reticulum and mitochondrial localization. Ser116 is subject to Phosphoserine; by host PKA. Positions Val122 to Ser173 are interaction with APOA2. The segment at Tyr164–Gly167 is important for lipid droplets localization. Residues Leu169 to Ala189 traverse the membrane as a helical segment. A propeptide spans Leu178 to Ala191 (ER anchor for the core protein, removed in mature form by host signal peptidase). At Ser190 to Gly358 the chain is on the lumenal side. N-linked (GlcNAc...) asparagine; by host glycosylation is found at Asn196, Asn209, Asn234, and Asn250. An important for fusion region spans residues Leu265–Arg296. The N-linked (GlcNAc...) asparagine; by host glycan is linked to Asn305. The helical transmembrane segment at Leu359 to Ala379 threads the bilayer. Over Gly380–Leu725 the chain is Lumenal. Residues Thr385 to Ile411 form an HVR1 region. Residues Asn417, Asn423, Asn430, and Asn448 are each glycosylated (N-linked (GlcNAc...) (high mannose) asparagine; by host). Intrachain disulfides connect Cys429–Cys552, Cys452–Cys459, Cys486–Cys494, and Cys503–Cys508. Residues Tyr474–Asp479 are HVR2. Residues Leu480–Gln493 form a CD81-binding 1 region. Asn532 is a glycosylation site (N-linked (GlcNAc...) (high mannose) asparagine; by host). Residue Asn540 is glycosylated (N-linked (GlcNAc...) asparagine; by host). The CD81-binding 2 stretch occupies residues Pro544–Gly551. A glycan (N-linked (GlcNAc...) (high mannose) asparagine; by host) is linked at Asn556. Residues Cys564 and Cys569 are joined by a disulfide bond. The N-linked (GlcNAc...) (high mannose) asparagine; by host glycan is linked to Asn576. 3 disulfides stabilise this stretch: Cys581–Cys585, Cys597–Cys620, and Cys607–Cys644. N-linked (GlcNAc...) (high mannose) asparagine; by host glycosylation is found at Asn623 and Asn645. A disulfide bridge links Cys652 with Cys677. The segment at Ser660–Glu671 is PKR/eIF2-alpha phosphorylation homology domain (PePHD). Residues Leu726–Ala746 form a helical membrane-spanning segment. The Lumenal portion of the chain corresponds to Ala747–Ala757. The helical transmembrane segment at Ser758 to Ile778 threads the bilayer. The Cytoplasmic portion of the chain corresponds to Lys779–Arg781. Residues Leu782–Leu803 traverse the membrane as a helical segment. Over Pro804–Glu813 the chain is Lumenal. Residues Met814–His834 traverse the membrane as a helical segment. Topologically, residues Tyr835 to Phe838 are cytoplasmic. Residues Leu839 to Val859 traverse the membrane as a helical segment. At Trp860–His881 the chain is on the lumenal side. Residues Pro882–Leu902 form a helical membrane-spanning segment. Positions Gln903 to Leu1026 constitute a Peptidase C18 domain. The Cytoplasmic segment spans residues Gln903–Thr1657. Residues Ala904–Arg1206 form a protease NS2-3 region. The S-palmitoyl cysteine; by host moiety is linked to residue Cys922. Residues Ala929–Val949 are interaction with host SCPS1. Active-site for protease NS2 activity; shared with dimeric partner residues include His952, Glu972, and Cys993. The region spanning Ala1027–Pro1208 is the Peptidase S29 domain. Catalysis depends on charge relay system; for serine protease NS3 activity residues His1083 and Asp1107. The Zn(2+) site is built by Cys1123 and Cys1125. Catalysis depends on Ser1165, which acts as the Charge relay system; for serine protease NS3 activity. Zn(2+) is bound by residues Cys1171 and His1175. A Helicase ATP-binding domain is found at Pro1217 to Asn1369. Ala1230–Ser1237 lines the ATP pocket. Mg(2+) contacts are provided by Ser1237 and Glu1317. The short motif at Asp1316–His1319 is the DECH box element. Positions Gln1486–Gly1497 are RNA-binding. The chain crosses the membrane as a helical span at residues Ser1658–Gly1678. Positions Ser1679–Gly1690 are NS3-binding. The Cytoplasmic portion of the chain corresponds to Ser1679–Asn1805. The helical transmembrane segment at Thr1806–Ser1824 threads the bilayer. Residues Ala1825–Ala1828 are Lumenal-facing. A helical membrane pass occupies residues Phe1829–Val1849. A topological domain (cytoplasmic) is located at residue Asp1850. A helical membrane pass occupies residues Ile1851–Gly1871. Residues Glu1872 to Asn1881 are Lumenal-facing. Residues Leu1882–Leu1902 form a helical membrane-spanning segment. Residues Arg1903 to Cys1972 lie on the Cytoplasmic side of the membrane. S-palmitoyl cysteine; by host attachment occurs at residues Cys1968 and Cys1972. An intramembrane segment occupies Ser1973–Lys2002. Over Leu2003–Arg2989 the chain is Cytoplasmic. Zn(2+)-binding residues include Cys2011, Cys2029, Cys2031, and Cys2052. Positions Glu2120–Ala2208 are FKBP8-binding. The tract at residues Glu2120–Thr2332 is transcriptional activation. An interaction with non-structural protein 4A region spans residues Pro2135–Pro2139. Residues Lys2187–Asp2220 form a disordered region. An interaction with host SKP2 region spans residues Arg2189–Pro2441. Ser2194 carries the post-translational modification Phosphoserine; by host; in p56. Residues Ser2194 to Leu2211 show a composition bias toward low complexity. Residues Ser2197, Ser2201, Ser2204, Ser2207, and Ser2210 each carry the phosphoserine; by host; in p58 modification. The tract at residues Ser2210–Lys2249 is ISDR. An interaction with EIF2AK2/PKR region spans residues Ser2210–Leu2275. The segment at Lys2249–Tyr2306 is NS4B-binding. The short motif at Pro2322–Pro2325 is the SH3-binding element. The short motif at Pro2326 to Val2334 is the Nuclear localization signal element. Lys2350 is covalently cross-linked (Glycyl lysine isopeptide (Lys-Gly) (interchain with G-Cter in ubiquitin)). The span at Thr2351–Gln2371 shows a compositional bias: polar residues. Residues Thr2351–Val2408 are disordered. A V3 region spans residues Ser2354–Asp2377. Residues Thr2372 to Val2382 show a composition bias toward acidic residues. Phosphoserine; by host occurs at positions 2448 and 2461. Residues Pro2633–Asp2751 enclose the RdRp catalytic domain. Residues Asp2639, Asp2737, and Asp2738 each contribute to the Mg(2+) site. The chain crosses the membrane as a helical span at residues Trp2990–Arg3010.

It belongs to the hepacivirus polyprotein family. In terms of assembly, homooligomer. Interacts with E1 (via C-terminus). Interacts with the non-structural protein 5A. Interacts (via N-terminus) with host STAT1 (via SH2 domain); this interaction results in decreased STAT1 phosphorylation and ubiquitin-mediated proteasome-dependent STAT1 degradation, leading to decreased IFN-stimulated gene transcription. Interacts with host STAT3; this interaction constitutively activates STAT3. Interacts with host LTBR receptor. Interacts with host TNFRSF1A receptor and possibly induces apoptosis. Interacts with host HNRPK. Interacts with host YWHAE. Interacts with host UBE3A/E6AP. Interacts with host DDX3X. Interacts with host APOA2. Interacts with host RXRA protein. Interacts with host SP110 isoform 3/Sp110b; this interaction sequesters the transcriptional corepressor SP110 away from the nucleus. Interacts with host CREB3 nuclear transcription protein; this interaction triggers cell transformation. Interacts with host ACY3. Interacts with host C1QR1. Interacts with host RBM24; this interaction, which enhances the interaction of the mature core protein with 5'-UTR, may inhibit viral translation and favor replication. Interacts with host EIF2AK2/PKR; this interaction induces the autophosphorylation of EIF2AK2. Part of the viral assembly initiation complex composed of NS2, E1, E2, NS3, NS4A, NS5A and the mature core protein. Forms a heterodimer with envelope glycoprotein E2. Interacts with mature core protein. Interacts with protease NS2. The heterodimer E1/E2 interacts with host CLDN1; this interaction plays a role in viral entry into host cell. Interacts with host SPSB2 (via C-terminus). Part of the viral assembly initiation complex composed of NS2, E1, E2, NS3, NS4A, NS5A and the mature core protein. Interacts with host NEURL3; this interaction prevents E1 binding to glycoprotein E2. As to quaternary structure, forms a heterodimer with envelope glycoprotein E1. Interacts with host CD81 and SCARB1 receptors; these interactions play a role in viral entry into host cell. Interacts with host EIF2AK2/PKR; this interaction inhibits EIF2AK2 and probably allows the virus to evade the innate immune response. Interacts with host CD209/DC-SIGN and CLEC4M/DC-SIGNR. Interact with host SPCS1; this interaction is essential for viral particle assembly. Interacts with protease NS2. The heterodimer E1/E2 interacts with host CLDN1; this interaction plays a role in viral entry into host cell. Part of the viral assembly initiation complex composed of NS2, E1, E2, NS3, NS4A, NS5A and the mature core protein. Interacts with host SLC3A2/4F2hc; the interaction may facilitate viral entry into host cell. Interacts with human PLSCR1. In terms of assembly, homohexamer. Homoheptamer. Interacts with protease NS2. Homodimer. Interacts with host SPCS1; this interaction is essential for viral particle assembly. Interacts with envelope glycoprotein E1. Interacts with envelope glycoprotein E2. Interacts with viroporin p7. Interacts with serine protease/helicase NS3. Part of the replication complex composed of NS2, NS3, NS4A, NS4B, NS5A and the RNA-directed RNA polymerase embedded in an ER-derived membranous web. Part of the viral assembly initiation complex composed of NS2, E1, E2, NS3, NS4A, NS5A and the mature core protein. As to quaternary structure, interacts with protease NS2. Interacts with non-structural protein 4A; this interaction stabilizes the folding of NS3 serine protease. NS3-NS4A interaction is essential for NS3 activation and allows membrane anchorage of the latter. NS3/NS4A complex also prevents phosphorylation of host IRF3, thus preventing the establishment of dsRNA induced antiviral state. Interacts with host MAVS; this interaction leads to the cleavage and inhibition of host MAVS. Interacts with host TICAM1; this interaction leads to the cleavage and inhibition of host TICAM1. Interacts with host TANK-binding kinase/TBK1; this interaction results in the inhibition of the association between TBK1 and IRF3, which leads to the inhibition of IRF3 activation. Interacts with host RBM24. Part of the replication complex composed of NS2, NS3, NS4A, NS4B, NS5A and the RNA-directed RNA polymerase embedded in an ER-derived membranous web. Part of the viral assembly initiation complex composed of NS2, E1, E2, NS3, NS4A, NS5A and the mature core protein. In terms of assembly, interacts with NS3 serine protease; this interaction stabilizes the folding of NS3 serine protease. NS3-NS4A interaction is essential for NS3 activation and allows membrane anchorage of the latter. Interacts with non-structural protein 5A (via N-terminus). Part of the replication complex composed of NS2, NS3, NS4A, NS4B, NS5A and the RNA-directed RNA polymerase embedded in an ER-derived membranous web. Part of the viral assembly initiation complex composed of NS2, E1, E2, NS3, NS4A, NS5A and the mature core protein. Homomultimer. Interacts with non-structural protein NS5A. Interacts with host PLA2G4C; this interaction likely initiates the recruitment of replication complexes to lipid droplets. Interacts with host STING; this interaction disrupts the interaction between STING and TBK1 thereby suppressing the interferon signaling. Part of the replication complex composed of NS2, NS3, NS4A, NS4B, NS5A and the RNA-directed RNA polymerase embedded in an ER-derived membranous web. As to quaternary structure, monomer. Homodimer; dimerization is required for RNA-binding. Interacts with the mature core protein. Interacts (via N-terminus) with non-structural protein 4A. Interacts with non-structural protein 4B. Interacts (via region D2) with RNA-directed RNA polymerase. Part of the viral assembly initiation complex composed of NS2, E1, E2, NS3, NS4A, NS5A and the mature core protein. Part of the replication complex composed of NS2, NS3, NS4A, NS4B, NS5A and the RNA-directed RNA polymerase embedded in an ER-derived membranous web. Interacts with host GRB2. Interacts with host BIN1. Interacts with host PIK3R1. Interacts with host SRCAP. Interacts with host FKBP8. Interacts (via C-terminus) with host VAPB (via MSP domain). Interacts with host EIF2AK2/PKR; this interaction leads to disruption of EIF2AK2 dimerization by NS5A and probably allows the virus to evade the innate immune response. Interacts (via N-terminus) with host PACSIN2 (via N-terminus); this interaction attenuates protein kinase C alpha-mediated phosphorylation of PACSIN2 by disrupting the interaction between PACSIN2 and PRKCA. Interacts (via N-terminus) with host SRC kinase (via SH2 domain). Interacts with most Src-family kinases. Interacts with host IFI27 and SKP2; promotes the ubiquitin-mediated proteasomal degradation of NS5A. Interacts with host GPS2. Interacts with host TNFRSF21; this interaction allows the modulation by the virus of JNK, p38 MAPK, STAT3, and Akt signaling pathways in a DR6-dependent manner. Interacts (via N-terminus) with host CIDEB (via N-terminus); this interaction seems to regulate the association of HCV particles with APOE. Interacts with host CHKA/Choline Kinase-alpha; CHKA bridges host PI4KA and NS5A and potentiates NS5A-stimulated PI4KA activity, which then facilitates the targeting of the ternary complex to the ER for viral replication. Interacts with host SPSB2 (via C-terminus); this interaction targets NS5A for ubiquitination and degradation. Interacts with host RAB18; this interaction may promote the association of NS5A and other replicase components with lipid droplets. Interacts (via region D2) with host PPIA/CYPA; the interaction stimulates RNA-binding ability of NS5A and is dependent on the peptidyl-prolyl cis-trans isomerase activity of PPIA/CYPA. Interacts with host TRIM14; this interaction induces the degradation of NS5A. In terms of assembly, homooligomer. Interacts with non-structural protein 5A. Interacts with host VAPB. Interacts with host PRK2/PKN2. Interacts with host HNRNPA1 and SEPT6; these interactions facilitate viral replication. Part of the replication complex composed of NS2, NS3, NS4A, NS4B, NS5A and the RNA-directed RNA polymerase. Zn(2+) is required as a cofactor. Requires Mg(2+) as cofactor. Post-translationally, specific enzymatic cleavages in vivo yield mature proteins. The structural proteins, core, E1, E2 and p7 are produced by proteolytic processing by host signal peptidases. The core protein precursor is synthesized as a 23 kDa, which is retained in the ER membrane through the hydrophobic signal peptide. Cleavage by the signal peptidase releases the 21 kDa mature core protein. The cleavage of the core protein precursor occurs between aminoacids 176 and 188 but the exact cleavage site is not known. Some degraded forms of the core protein appear as well during the course of infection. The other proteins (p7, NS2, NS3, NS4A, NS4B, NS5A and NS5B) are cleaved by the viral proteases. Autoprocessing between NS2 and NS3 is mediated by the NS2 cysteine protease catalytic domain and regulated by the NS3 N-terminal domain. Phosphorylated by host PKC and PKA. In terms of processing, ubiquitinated; mediated by UBE3A and leading to core protein subsequent proteasomal degradation. Post-translationally, highly N-glycosylated. Palmitoylation is required for NS2/3 autoprocessing and E2 recruitment to membranes. In terms of processing, palmitoylated. This modification may play a role in its polymerization or in protein-protein interactions. Post-translationally, phosphorylated on serines in a basal form termed p56. p58 is a hyperphosphorylated form of p56. p56 and p58 coexist in the cell in roughly equivalent amounts. Hyperphosphorylation is dependent on the presence of NS4A. Host CSNK1A1/CKI-alpha or RPS6KB1 kinases may be responsible for NS5A phosphorylation. Tyrosine phosphorylation is essential for the interaction with host SRC. In terms of processing, ubiquitinated. Ubiquitination, most probably at Lys-2350, mediated by host IFI27 and SKP2 leads to proteasomal degradation, restricting viral infection. Ubiquitination by host TRIM22 leads to interruption of viral replication. Post-translationally, the N-terminus is phosphorylated by host PRK2/PKN2.

The protein localises to the host endoplasmic reticulum membrane. Its subcellular location is the host mitochondrion membrane. It is found in the virion. The protein resides in the host cytoplasm. It localises to the host nucleus. The protein localises to the host lipid droplet. Its subcellular location is the virion membrane. It is found in the host mitochondrion. The protein resides in the host cell membrane. It localises to the host perinuclear region. It carries out the reaction Hydrolysis of four peptide bonds in the viral precursor polyprotein, commonly with Asp or Glu in the P6 position, Cys or Thr in P1 and Ser or Ala in P1'.. The enzyme catalyses a ribonucleoside 5'-triphosphate + H2O = a ribonucleoside 5'-diphosphate + phosphate + H(+). The catalysed reaction is ATP + H2O = ADP + phosphate + H(+). It catalyses the reaction RNA(n) + a ribonucleoside 5'-triphosphate = RNA(n+1) + diphosphate. With respect to regulation, inhibited by the antiviral drug hexamethylene amiloride. Inhibition by amantadine appears to be genotype-dependent. Also inhibited by long-alkyl-chain iminosugar derivatives. Its activity is regulated as follows. Activity is up-regulated by PRK2/PKN2-mediated phosphorylation. Its function is as follows. Packages viral RNA to form a viral nucleocapsid, and promotes virion budding. Participates in the viral particle production as a result of its interaction with the non-structural protein 5A. Binds RNA and may function as a RNA chaperone to induce the RNA structural rearrangements taking place during virus replication. Modulates viral translation initiation by interacting with viral IRES and 40S ribosomal subunit. Affects various cell signaling pathways, host immunity and lipid metabolism. Prevents the establishment of cellular antiviral state by blocking the interferon-alpha/beta (IFN-alpha/beta) and IFN-gamma signaling pathways and by blocking the formation of phosphorylated STAT1 and promoting ubiquitin-mediated proteasome-dependent degradation of STAT1. Activates STAT3 leading to cellular transformation. Regulates the activity of cellular genes, including c-myc and c-fos. May repress the promoter of p53, and sequester CREB3 and SP110 isoform 3/Sp110b in the cytoplasm. Represses cell cycle negative regulating factor CDKN1A, thereby interrupting an important check point of normal cell cycle regulation. Targets transcription factors involved in the regulation of inflammatory responses and in the immune response: suppresses TNF-induced NF-kappa-B activation, and activates AP-1. Binds to dendritic cells (DCs) via C1QR1, resulting in down-regulation of T-lymphocytes proliferation. Alters lipid metabolism by interacting with hepatocellular proteins involved in lipid accumulation and storage. Induces up-regulation of FAS promoter activity, and thereby contributes to the increased triglyceride accumulation in hepatocytes (steatosis). Functionally, forms a heterodimer with envelope glycoprotein E2, which mediates virus attachment to the host cell, virion internalization through clathrin-dependent endocytosis and fusion with host membrane. Fusion with the host cell is most likely mediated by both E1 and E2, through conformational rearrangements of the heterodimer required for fusion rather than a classical class II fusion mechanism. E1/E2 heterodimer binds host apolipoproteins such as APOB and ApoE thereby forming a lipo-viro-particle (LVP). APOE associated to the LVP allows the initial virus attachment to cell surface receptors such as the heparan sulfate proteoglycans (HSPGs), syndecan-1 (SDC1), syndecan-1 (SDC2), the low-density lipoprotein receptor (LDLR) and scavenger receptor class B type I (SCARB1). The cholesterol transfer activity of SCARB1 allows E2 exposure and binding of E2 to SCARB1 and the tetraspanin CD81. E1/E2 heterodimer binding on CD81 activates the epithelial growth factor receptor (EGFR) signaling pathway. Diffusion of the complex E1-E2-EGFR-SCARB1-CD81 to the cell lateral membrane allows further interaction with Claudin 1 (CLDN1) and occludin (OCLN) to finally trigger HCV entry. Forms a heterodimer with envelope glycoprotein E1, which mediates virus attachment to the host cell, virion internalization through clathrin-dependent endocytosis and fusion with host membrane. Fusion with the host cell is most likely mediated by both E1 and E2, through conformational rearrangements of the heterodimer required for fusion rather than a classical class II fusion mechanism. The interaction between envelope glycoprotein E2 and host apolipoprotein E/APOE allows the proper assembly, maturation and infectivity of the viral particles. This interaction is probably promoted via the up-regulation of cellular autophagy by the virus. E1/E2 heterodimer binds host apolipoproteins such as APOB and APOE thereby forming a lipo-viro-particle (LVP). APOE associated to the LVP allows the initial virus attachment to cell surface receptors such as the heparan sulfate proteoglycans (HSPGs), syndecan-1 (SDC1), syndecan-1 (SDC2), the low-density lipoprotein receptor (LDLR) and scavenger receptor class B type I (SCARB1). The cholesterol transfer activity of SCARB1 allows E2 exposure and binding of E2 to SCARB1 and the tetraspanin CD81. E1/E2 heterodimer binding on CD81 activates the epithelial growth factor receptor (EGFR) signaling pathway. Diffusion of the complex E1-E2-EGFR-SCARB1-CD81 to the cell lateral membrane allows further interaction with Claudin 1 (CLDN1) and occludin (OCLN) to finally trigger HCV entry. Inhibits host EIF2AK2/PKR activation, preventing the establishment of an antiviral state. Viral ligand for CD209/DC-SIGN and CLEC4M/DC-SIGNR, which are respectively found on dendritic cells (DCs), and on liver sinusoidal endothelial cells and macrophage-like cells of lymph node sinuses. These interactions allow the capture of circulating HCV particles by these cells and subsequent facilitated transmission to permissive cells such as hepatocytes and lymphocyte subpopulations. The interaction between E2 and host amino acid transporter complex formed by SLC3A2 and SLC7A5/LAT1 may facilitate viral entry into host cell. In terms of biological role, ion channel protein that acts as a viroporin and plays an essential role in the assembly, envelopment and secretion of viral particles. Regulates the host cell secretory pathway, which induces the intracellular retention of viral glycoproteins and favors assembly of viral particles. Creates a pore in acidic organelles and releases Ca(2+) and H(+) in the cytoplasm of infected cells, leading to a productive viral infection. High levels of cytoplasmic Ca(2+) may trigger membrane trafficking and transport of viral ER-associated proteins to viroplasms, sites of viral genome replication. This ionic imbalance induces the assembly of the inflammasome complex, which triggers the maturation of pro-IL-1beta into IL-1beta through the action of caspase-1. Targets also host mitochondria and induces mitochondrial depolarization. In addition of its role as a viroporin, acts as a lipid raft adhesion factor. Its function is as follows. Cysteine protease required for the proteolytic auto-cleavage between the non-structural proteins NS2 and NS3. The N-terminus of NS3 is required for the function of NS2 protease (active region NS2-3). Promotes the initiation of viral particle assembly by mediating the interaction between structural and non-structural proteins. Functionally, displays three enzymatic activities: serine protease with a chymotrypsin-like fold, NTPase and RNA helicase. NS3 serine protease, in association with NS4A, is responsible for the cleavages of NS3-NS4A, NS4A-NS4B, NS4B-NS5A and NS5A-NS5B. The NS3/NS4A complex prevents phosphorylation of host IRF3, thus preventing the establishment of dsRNA induced antiviral state. The NS3/NS4A complex induces host amino acid transporter component SLC3A2, thus contributing to HCV propagation. NS3 RNA helicase binds to RNA and unwinds both dsDNA and dsRNA in the 3' to 5' direction, and likely resolves RNA complicated stable secondary structures in the template strand. Binds a single ATP and catalyzes the unzipping of a single base pair of dsRNA. Inhibits host antiviral proteins TBK1 and IRF3 thereby preventing the establishment of an antiviral state. Cleaves host MAVS/CARDIF thereby preventing the establishment of an antiviral state. Cleaves host TICAM1/TRIF, thereby disrupting TLR3 signaling and preventing the establishment of an antiviral state. Induces a specific membrane alteration that serves as a scaffold for the virus replication complex. This membrane alteration gives rise to the so-called ER-derived membranous web that contains the replication complex. NS4B self-interaction contributes to its function in membranous web formation. Promotes host TRIF protein degradation in a CASP8-dependent manner thereby inhibiting host TLR3-mediated interferon signaling. Disrupts the interaction between STING and TBK1 contributing to the inhibition of interferon signaling. In terms of biological role, phosphorylated protein that is indispensable for viral replication and assembly. Both hypo- and hyperphosphorylated states are required for the viral life cycle. The hyperphosphorylated form of NS5A is an inhibitor of viral replication. Involved in RNA-binding and especially in binding to the viral genome. Zinc is essential for RNA-binding. Participates in the viral particle production as a result of its interaction with the mature viral core protein. Its interaction with host VAPB may target the viral replication complex to vesicles. Down-regulates viral IRES translation initiation. Mediates interferon resistance, presumably by interacting with and inhibiting host EIF2AK2/PKR. Prevents BIN1-induced apoptosis. Acts as a transcriptional activator of some host genes important for viral replication when localized in the nucleus. Via the interaction with host PACSIN2, modulates lipid droplet formation in order to promote virion assembly. Modulates TNFRSF21/DR6 signaling pathway for viral propagation. Its function is as follows. RNA-dependent RNA polymerase that performs primer-template recognition and RNA synthesis during viral replication. Initiates RNA transcription/replication at a flavin adenine dinucleotide (FAD), resulting in a 5'- FAD cap on viral RNAs. In this way, recognition of viral 5' RNA by host pattern recognition receptors can be bypassed, thereby evading activation of antiviral pathways. Functionally, peptide cofactor which forms a non-covalent complex with the N-terminal of NS3 serine protease. The NS3/NS4A complex prevents phosphorylation of host IRF3, thus preventing the establishment of dsRNA induced antiviral state. The NS3/NS4A complex induces host amino acid transporter component SLC3A2, thus contributing to HCV propagation. This chain is Genome polyprotein, found in Homo sapiens (Human).